Consider the following 233-residue polypeptide: Protein Atu3128 (233 aa).

This sequence belongs to the glycosyl hydrolase 88 family.

Its function is as follows. Seems to regulate the surface properties of the bacterium in the presence of plant cells or plant cell extracts. Mutations in this protein are responsible for an increased aggregation of the bacteria in the presence of pea root cap cells. This Agrobacterium fabrum (strain C58 / ATCC 33970) (Agrobacterium tumefaciens (strain C58)) protein is Protein Atu3128.